The following is a 245-amino-acid chain: Octanoyltransferase (245 aa).

One can recognise a BPL/LPL catalytic domain in the interval 54-238 (GEATELVWLL…AFENIFGETR (185 aa)). Residues 92–99 (RGGQLTYH), 167–169 (AIG), and 180–182 (GIA) each bind substrate. Residue Cys-198 is the Acyl-thioester intermediate of the active site.

Belongs to the LipB family.

The protein localises to the cytoplasm. It catalyses the reaction octanoyl-[ACP] + L-lysyl-[protein] = N(6)-octanoyl-L-lysyl-[protein] + holo-[ACP] + H(+). It functions in the pathway protein modification; protein lipoylation via endogenous pathway; protein N(6)-(lipoyl)lysine from octanoyl-[acyl-carrier-protein]: step 1/2. Functionally, catalyzes the transfer of endogenously produced octanoic acid from octanoyl-acyl-carrier-protein onto the lipoyl domains of lipoate-dependent enzymes. Lipoyl-ACP can also act as a substrate although octanoyl-ACP is likely to be the physiological substrate. The chain is Octanoyltransferase from Rhodopseudomonas palustris (strain ATCC BAA-98 / CGA009).